The chain runs to 218 residues: Thiopurine S-methyltransferase (218 aa).

S-adenosyl-L-methionine-binding residues include Trp10, Leu45, Glu66, and Arg123.

This sequence belongs to the class I-like SAM-binding methyltransferase superfamily. TPMT family.

It localises to the cytoplasm. The catalysed reaction is S-adenosyl-L-methionine + a thiopurine = S-adenosyl-L-homocysteine + a thiopurine S-methylether.. In Azotobacter vinelandii (strain DJ / ATCC BAA-1303), this protein is Thiopurine S-methyltransferase.